A 917-amino-acid chain; its full sequence is Translation initiation factor IF-2 (917 aa).

Over residues 102 to 249 the composition is skewed to basic and acidic residues; the sequence is EKSQAEEQAL…KWTAEPKAPE (148 aa). Positions 102–326 are disordered; sequence EKSQAEEQAL…KSSTLQQGFH (225 aa). A compositionally biased stretch (basic residues) spans 279 to 293; the sequence is RRGRTAKAPRAKKNN. A compositionally biased stretch (basic and acidic residues) spans 294 to 306; it reads RHSEKADREEARA. A tr-type G domain is found at 416 to 585; sequence SRAPVVTIMG…LLQAEVLELK (170 aa). The interval 425–432 is G1; sequence GHVDHGKT. A GTP-binding site is contributed by 425–432; the sequence is GHVDHGKT. The interval 450–454 is G2; sequence GITQH. A G3 region spans residues 471–474; sequence DTPG. Residues 471-475 and 525-528 contribute to the GTP site; these read DTPGH and NKID. The interval 525–528 is G4; sequence NKID. The interval 561-563 is G5; sequence SAK.

The protein belongs to the TRAFAC class translation factor GTPase superfamily. Classic translation factor GTPase family. IF-2 subfamily.

The protein localises to the cytoplasm. One of the essential components for the initiation of protein synthesis. Protects formylmethionyl-tRNA from spontaneous hydrolysis and promotes its binding to the 30S ribosomal subunits. Also involved in the hydrolysis of GTP during the formation of the 70S ribosomal complex. This Proteus vulgaris protein is Translation initiation factor IF-2 (infB).